The primary structure comprises 173 residues: Alpha-crystallin A chain (173 aa).

Met1 is modified (N-acetylmethionine). The segment at 1–63 is required for complex formation with BFSP1 and BFSP2; sequence MDIAIQHPWF…RTVLDSGISE (63 aa). Gln6 is subject to Deamidated glutamine; partial. Ser45 carries the post-translational modification Phosphoserine. A Deamidated glutamine; partial modification is found at Gln50. In terms of domain architecture, sHSP spans 52–162; that stretch reads LFRTVLDSGI…GHSERAIPVS (111 aa). Lys70 is modified (N6-acetyllysine). Gln90 bears the Deamidated glutamine; partial mark. Position 99 is an N6-acetyllysine (Lys99). His100 is a binding site for Zn(2+). Asn101 bears the Deamidated asparagine; partial mark. Positions 102 and 107 each coordinate Zn(2+). Ser122 bears the Phosphoserine mark. Asn123 is modified (deamidated asparagine; partial). Residues 144-173 are disordered; sequence PKVPSGVDAGHSERAIPVSREEKPSSAPSS. Residues 153-167 are compositionally biased toward basic and acidic residues; that stretch reads GHSERAIPVSREEKP. Zn(2+) is bound at residue His154. Ser162 carries an O-linked (GlcNAc) serine glycan.

The protein belongs to the small heat shock protein (HSP20) family. In terms of assembly, heteromer composed of three CRYAA and one CRYAB subunits. Inter-subunit bridging via zinc ions enhances stability, which is crucial as there is no protein turn over in the lens. Can also form homodimers and homotetramers (dimers of dimers) which serve as the building blocks of homooligomers. Within homooligomers, the zinc-binding motif is created from residues of 3 different molecules. His-100 and Glu-102 from one molecule are ligands of the zinc ion, and His-107 and His-154 residues from additional molecules complete the site with tetrahedral coordination geometry. Part of a complex required for lens intermediate filament formation composed of BFSP1, BFSP2 and CRYAA. Post-translationally, acetylation at Lys-70 may increase chaperone activity. In terms of processing, undergoes age-dependent proteolytical cleavage at the C-terminus.

The protein resides in the cytoplasm. It localises to the nucleus. Functionally, contributes to the transparency and refractive index of the lens. Acts as a chaperone, preventing aggregation of various proteins under a wide range of stress conditions. Required for the correct formation of lens intermediate filaments as part of a complex composed of BFSP1, BFSP2 and CRYAA. This Ovis aries (Sheep) protein is Alpha-crystallin A chain (CRYAA).